Here is a 537-residue protein sequence, read N- to C-terminus: Glucose-6-phosphate isomerase (537 aa).

Residue Glu-341 is the Proton donor of the active site. Catalysis depends on residues His-372 and Lys-501.

This sequence belongs to the GPI family.

The protein localises to the cytoplasm. It catalyses the reaction alpha-D-glucose 6-phosphate = beta-D-fructose 6-phosphate. It functions in the pathway carbohydrate biosynthesis; gluconeogenesis. Its pathway is carbohydrate degradation; glycolysis; D-glyceraldehyde 3-phosphate and glycerone phosphate from D-glucose: step 2/4. Catalyzes the reversible isomerization of glucose-6-phosphate to fructose-6-phosphate. This is Glucose-6-phosphate isomerase from Jannaschia sp. (strain CCS1).